The sequence spans 566 residues: MKQSKVFIPTRRDVPAEAEALSHQLLLKAGLIKQSTSGIYSYLPLASRVLNNISKIIREEMESIDAVEILMPALQQAELWEESGRWGAYGPELMRLKDRNGREFALGPTHEEVVTSIVRDELKSYKQLPLTLFQIQSKFRDEKRPRFGLLRGREFIMKDAYSFHADEASLDETYQDMYNAYDRIFKRVGINARPVVADSGAIGGNHTHEFMALSEIGEDTIVYSEHSDYAANIEKAEVVYHPNEKHTEVAELEKVETPNVKTAQELADFLNRPVDEIVKSMIFKIDGEFIMFLIRGHHELNDVKVKAFFETDNVEMATQEEIVNLLGANPGSLGPVHDKDIRIFADNYVRDLNNLVVGANEDGSHYINANLDRDFKVDEFGDFRFILEGETLSDGSGEAKFAEGIEVGQVFKLGTKYSEAMNATFLDNQGKAKPLIMGCYGIGVSRTLSAIVEQNNDENGIIWPKSVTPFDLHLITINPKKDEQLELGDQLYKELQQQYDVLYDDRKDRAGVKFNDADLIGLPIRIVVGKNASEGIVEVKVRQTGESEEVHINDLNTHIATLYSNL.

It belongs to the class-II aminoacyl-tRNA synthetase family. ProS type 1 subfamily. As to quaternary structure, homodimer.

It is found in the cytoplasm. It catalyses the reaction tRNA(Pro) + L-proline + ATP = L-prolyl-tRNA(Pro) + AMP + diphosphate. Functionally, catalyzes the attachment of proline to tRNA(Pro) in a two-step reaction: proline is first activated by ATP to form Pro-AMP and then transferred to the acceptor end of tRNA(Pro). As ProRS can inadvertently accommodate and process non-cognate amino acids such as alanine and cysteine, to avoid such errors it has two additional distinct editing activities against alanine. One activity is designated as 'pretransfer' editing and involves the tRNA(Pro)-independent hydrolysis of activated Ala-AMP. The other activity is designated 'posttransfer' editing and involves deacylation of mischarged Ala-tRNA(Pro). The misacylated Cys-tRNA(Pro) is not edited by ProRS. The protein is Proline--tRNA ligase of Staphylococcus haemolyticus (strain JCSC1435).